A 418-amino-acid chain; its full sequence is Light-independent protochlorophyllide reductase subunit N (418 aa).

Cys-17, Cys-42, and Cys-103 together coordinate [4Fe-4S] cluster.

This sequence belongs to the BchN/ChlN family. In terms of assembly, protochlorophyllide reductase is composed of three subunits; ChlL, ChlN and ChlB. Forms a heterotetramer of two ChlB and two ChlN subunits. Requires [4Fe-4S] cluster as cofactor.

It carries out the reaction chlorophyllide a + oxidized 2[4Fe-4S]-[ferredoxin] + 2 ADP + 2 phosphate = protochlorophyllide a + reduced 2[4Fe-4S]-[ferredoxin] + 2 ATP + 2 H2O. It participates in porphyrin-containing compound metabolism; chlorophyll biosynthesis (light-independent). Functionally, component of the dark-operative protochlorophyllide reductase (DPOR) that uses Mg-ATP and reduced ferredoxin to reduce ring D of protochlorophyllide (Pchlide) to form chlorophyllide a (Chlide). This reaction is light-independent. The NB-protein (ChlN-ChlB) is the catalytic component of the complex. The polypeptide is Light-independent protochlorophyllide reductase subunit N (Prochlorococcus marinus (strain MIT 9215)).